The chain runs to 301 residues: MEIVPVGEESLGVRSMCLYVETRDLRILLDAGVSLAPRRFGLPPHPLELQRAREVREQILRLAAYADVVTISHYHRDHFTVPYPSQYMATDSETYKAVYGEKTVLAKSPHDLNWSQRRRHYGLAKALDGVATVVYADGGEWRFGTTVVRASGPLWHGPAGSKTGRVIAFAVSDGEETLAFIPDVEGPVEEEAVHFAEEVKPTVVVVGGPPTYLGWDLASAVSNLKRIVDLRPRLLVLAHHLLRDVQWREKVGEVLQYAERRGVEVATYAKLAGREEQLLEARRRELYGETGRGEEAGEEEE.

This sequence belongs to the UPF0282 family.

The sequence is that of UPF0282 protein Pcal_1546 from Pyrobaculum calidifontis (strain DSM 21063 / JCM 11548 / VA1).